The sequence spans 715 residues: Fatty acid oxidation complex subunit alpha (715 aa).

The enoyl-CoA hydratase stretch occupies residues 1–190; sequence MTTTSAFMLN…KAGLVDDVVP (190 aa). Positions 306–715 are 3-hydroxyacyl-CoA dehydrogenase; it reads GPLNSVGILG…WTNGETDQGN (410 aa).

This sequence in the N-terminal section; belongs to the enoyl-CoA hydratase/isomerase family. It in the central section; belongs to the 3-hydroxyacyl-CoA dehydrogenase family. In terms of assembly, heterotetramer of two alpha chains (FadJ) and two beta chains (FadI).

It localises to the cytoplasm. It carries out the reaction a (3S)-3-hydroxyacyl-CoA = a (2E)-enoyl-CoA + H2O. The catalysed reaction is a 4-saturated-(3S)-3-hydroxyacyl-CoA = a (3E)-enoyl-CoA + H2O. The enzyme catalyses a (3S)-3-hydroxyacyl-CoA + NAD(+) = a 3-oxoacyl-CoA + NADH + H(+). It catalyses the reaction (3S)-3-hydroxybutanoyl-CoA = (3R)-3-hydroxybutanoyl-CoA. The protein operates within lipid metabolism; fatty acid beta-oxidation. Catalyzes the formation of a hydroxyacyl-CoA by addition of water on enoyl-CoA. Also exhibits 3-hydroxyacyl-CoA epimerase and 3-hydroxyacyl-CoA dehydrogenase activities. This chain is Fatty acid oxidation complex subunit alpha, found in Salmonella dublin (strain CT_02021853).